The primary structure comprises 1324 residues: DNA-directed RNA polymerase subunit beta' (1324 aa).

Zn(2+) is bound by residues cysteine 219, cysteine 292, cysteine 299, and cysteine 302. Residues 1293–1324 (ARDFEFASSDVEEDELTEEDDDYGDEEEEDAF) form a disordered region. The segment covering 1302 to 1324 (DVEEDELTEEDDDYGDEEEEDAF) has biased composition (acidic residues).

Belongs to the RNA polymerase beta' chain family. RpoC2 subfamily. As to quaternary structure, in cyanobacteria the RNAP catalytic core is composed of 2 alpha, 1 beta, 1 beta', 1 gamma and 1 omega subunit. When a sigma factor is associated with the core the holoenzyme is formed, which can initiate transcription. Requires Zn(2+) as cofactor.

The enzyme catalyses RNA(n) + a ribonucleoside 5'-triphosphate = RNA(n+1) + diphosphate. In terms of biological role, DNA-dependent RNA polymerase catalyzes the transcription of DNA into RNA using the four ribonucleoside triphosphates as substrates. The protein is DNA-directed RNA polymerase subunit beta' of Thermosynechococcus vestitus (strain NIES-2133 / IAM M-273 / BP-1).